The primary structure comprises 204 residues: Methyl-CpG-binding domain-containing protein 1 (204 aa).

The tract at residues 1 to 46 (MLPFPAMNLKKSRSENSSVASSGSKIEEQTEKSAEPTTIKVQKKAG) is disordered. A compositionally biased stretch (polar residues) spans 15–24 (ENSSVASSGS). A compositionally biased stretch (basic and acidic residues) spans 25-34 (KIEEQTEKSA). A CW-type zinc finger spans residues 49-104 (GRSIDVFAVQCEKCMKWRKIDTQDEYEDIRSRVQEDPFFCKTKEGVSCEDVGDLNY). The MBD-associated domain (MAD) signature appears at 58 to 96 (QCEKCMKWRKIDTQDEYEDIRSRVQEDPFFCKTKEGVSC). Residues cysteine 59, cysteine 62, cysteine 88, and cysteine 96 each contribute to the Zn(2+) site. Residues 110–180 (WVIDKPGLPR…GDFNFTVPKV (71 aa)) form the MBD domain.

As to expression, mostly expressed in flowers and buds.

It localises to the nucleus. In terms of biological role, probable transcriptional regulator. This chain is Methyl-CpG-binding domain-containing protein 1 (MBD1), found in Arabidopsis thaliana (Mouse-ear cress).